Consider the following 340-residue polypeptide: UDP-3-O-(3-hydroxymyristoyl)glucosamine N-acyltransferase (340 aa).

His-239 serves as the catalytic Proton acceptor.

It belongs to the transferase hexapeptide repeat family. LpxD subfamily. As to quaternary structure, homotrimer.

The enzyme catalyses a UDP-3-O-[(3R)-3-hydroxyacyl]-alpha-D-glucosamine + a (3R)-hydroxyacyl-[ACP] = a UDP-2-N,3-O-bis[(3R)-3-hydroxyacyl]-alpha-D-glucosamine + holo-[ACP] + H(+). It carries out the reaction UDP-3-O-[(3R)-3-hydroxytetradecanoyl]-alpha-D-glucosamine + (3R)-hydroxytetradecanoyl-[ACP] = UDP-2-N,3-O-bis[(3R)-3-hydroxytetradecanoyl]-alpha-D-glucosamine + holo-[ACP] + H(+). Its pathway is glycolipid biosynthesis; lipid IV(A) biosynthesis; lipid IV(A) from (3R)-3-hydroxytetradecanoyl-[acyl-carrier-protein] and UDP-N-acetyl-alpha-D-glucosamine: step 3/6. Its function is as follows. Catalyzes the N-acylation of UDP-3-O-(hydroxytetradecanoyl)glucosamine using 3-hydroxytetradecanoyl-ACP as the acyl donor. Is involved in the biosynthesis of lipid A, a phosphorylated glycolipid that anchors the lipopolysaccharide to the outer membrane of the cell. This is UDP-3-O-(3-hydroxymyristoyl)glucosamine N-acyltransferase from Wigglesworthia glossinidia brevipalpis.